The primary structure comprises 529 residues: Type I inositol polyphosphate 5-phosphatase 5 (529 aa).

2 catalytic regions span residues Asp371 to Thr386 and Lys451 to Glu466.

The protein belongs to the inositol polyphosphate 5-phosphatase family.

May be involved in the regulation of root hairs development. Required for restricting both the size of the root-hair initiation site and the width of the root hairs during the transition to tip growth, but is not required for normal subsequent tip growth. The chain is Type I inositol polyphosphate 5-phosphatase 5 from Arabidopsis thaliana (Mouse-ear cress).